Consider the following 173-residue polypeptide: Crossover junction endodeoxyribonuclease RuvC (173 aa).

Catalysis depends on residues Asp8, Glu67, and Asp139. Asp8, Glu67, and Asp139 together coordinate Mg(2+).

It belongs to the RuvC family. As to quaternary structure, homodimer which binds Holliday junction (HJ) DNA. The HJ becomes 2-fold symmetrical on binding to RuvC with unstacked arms; it has a different conformation from HJ DNA in complex with RuvA. In the full resolvosome a probable DNA-RuvA(4)-RuvB(12)-RuvC(2) complex forms which resolves the HJ. The cofactor is Mg(2+).

It localises to the cytoplasm. It catalyses the reaction Endonucleolytic cleavage at a junction such as a reciprocal single-stranded crossover between two homologous DNA duplexes (Holliday junction).. The RuvA-RuvB-RuvC complex processes Holliday junction (HJ) DNA during genetic recombination and DNA repair. Endonuclease that resolves HJ intermediates. Cleaves cruciform DNA by making single-stranded nicks across the HJ at symmetrical positions within the homologous arms, yielding a 5'-phosphate and a 3'-hydroxyl group; requires a central core of homology in the junction. The consensus cleavage sequence is 5'-(A/T)TT(C/G)-3'. Cleavage occurs on the 3'-side of the TT dinucleotide at the point of strand exchange. HJ branch migration catalyzed by RuvA-RuvB allows RuvC to scan DNA until it finds its consensus sequence, where it cleaves and resolves the cruciform DNA. In Shewanella putrefaciens (strain CN-32 / ATCC BAA-453), this protein is Crossover junction endodeoxyribonuclease RuvC.